An 85-amino-acid chain; its full sequence is Large ribosomal subunit protein bL27 (85 aa).

The disordered stretch occupies residues 1-21; it reads MAHKKAGGSTRNGRDSESKRL.

This sequence belongs to the bacterial ribosomal protein bL27 family.

This is Large ribosomal subunit protein bL27 from Ectopseudomonas mendocina (strain ymp) (Pseudomonas mendocina).